We begin with the raw amino-acid sequence, 327 residues long: Cobalamin biosynthesis protein CobD (327 aa).

Helical transmembrane passes span 63–83 (VGIL…ARLF), 84–104 (DVLG…FLAQ), 158–178 (FSDG…PGLL), and 305–325 (VFYA…LPLL).

The protein belongs to the CobD/CbiB family.

The protein localises to the cell membrane. The protein operates within cofactor biosynthesis; adenosylcobalamin biosynthesis. Functionally, converts cobyric acid to cobinamide by the addition of aminopropanol on the F carboxylic group. The protein is Cobalamin biosynthesis protein CobD of Rhizobium meliloti (strain 1021) (Ensifer meliloti).